We begin with the raw amino-acid sequence, 135 residues long: MAREFSRLDRVAEQIQKELAQLIQRELKDPRLGMVTVNSVKVSKDLSYADVYVTVLNLKDVEDDGDASKASLKVLESAAGFLRSELGRAIKLRVMPQLRFHYDASVSNAQRLGALIQKARAKDSSASDSSDDSHN.

Belongs to the RbfA family. In terms of assembly, monomer. Binds 30S ribosomal subunits, but not 50S ribosomal subunits or 70S ribosomes.

The protein localises to the cytoplasm. Functionally, one of several proteins that assist in the late maturation steps of the functional core of the 30S ribosomal subunit. Associates with free 30S ribosomal subunits (but not with 30S subunits that are part of 70S ribosomes or polysomes). Required for efficient processing of 16S rRNA. May interact with the 5'-terminal helix region of 16S rRNA. This chain is Ribosome-binding factor A, found in Hahella chejuensis (strain KCTC 2396).